The following is a 450-amino-acid chain: UPF0210 protein CPF_1748 (450 aa).

The protein belongs to the UPF0210 family. As to quaternary structure, homodimer.

The sequence is that of UPF0210 protein CPF_1748 from Clostridium perfringens (strain ATCC 13124 / DSM 756 / JCM 1290 / NCIMB 6125 / NCTC 8237 / Type A).